Reading from the N-terminus, the 671-residue chain is Carbohydrate acetyl esterase/feruloyl esterase (671 aa).

An N-terminal signal peptide occupies residues 1 to 24; sequence MYQSTLKTILLASALLILPASMSA. Positions 1-296 are carbohydrate acetyl esterase; that stretch reads MYQSTLKTIL…YGEAVARHLG (296 aa). Catalysis depends on for acetyl esterase activity residues Ser55, Asp271, and His274. Positions 297-671 are feruloyl esterase; it reads YEPKRPYIEM…NEFIPHLFKK (375 aa).

The protein in the N-terminal section; belongs to the carbohydrate esterase 6 family.

It carries out the reaction feruloyl-polysaccharide + H2O = ferulate + polysaccharide.. It functions in the pathway glycan degradation; xylan degradation. In terms of biological role, involved in degradation of plant cell wall polysaccharides. Bifunctional esterase that possesses both acetyl esterase and ferulic acid esterase activities. Has deacetylase activity towards acetylated xylo-oligosaccharides smaller than xylo-heptaose, as well as from glucose-pentaacetate. Is also able to release ferulic acid from methylferulate, and from the more natural substrates wheat bran, corn fiber, and XOS(FA,Ac), a corn fiber-derived substrate enriched in O-acetyl and ferulic acid esters. The sequence is that of Carbohydrate acetyl esterase/feruloyl esterase from Xylanibacter ruminicola (strain ATCC 19189 / DSM 19721 / CIP 105475 / JCM 8958 / 23) (Prevotella ruminicola).